The following is a 154-amino-acid chain: Histidine-containing phosphotransfer protein 1 (154 aa).

N-acetylmethionine is present on Met-1. Positions 38-143 (NPDFVSQVVT…FKLEQQIVAS (106 aa)) constitute an HPt domain. His-79 is subject to Phosphohistidine.

Interacts with the B-type response regulators ARR1, ARR2, ARR4 and ARR9. Binds to ETR1, AHK2, AHK3, AHK4, AHK5 and FBR12. Post-translationally, two-component system major event consists of a His-to-Asp phosphorelay between a sensor histidine kinase (HK) and a response regulator (RR). In plants, the His-to-Asp phosphorelay involves an additional intermediate named Histidine-containing phosphotransfer protein (HPt). This multistep phosphorelay consists of a His-Asp-His-Asp sequential transfer of a phosphate group between first a His and an Asp of the HK protein, followed by the transfer to a conserved His of the HPt protein and finally the transfer to an Asp in the receiver domain of the RR protein. Strongly expressed in roots.

Its subcellular location is the cytoplasm. The protein resides in the cytosol. It is found in the nucleus. Functionally, functions as a two-component phosphorelay mediators between cytokinin sensor histidine kinases and response regulator (B-type ARRs). Plays an important role in propagating cytokinin signal transduction through the multistep His-to-Asp phosphorelay. The polypeptide is Histidine-containing phosphotransfer protein 1 (AHP1) (Arabidopsis thaliana (Mouse-ear cress)).